A 512-amino-acid polypeptide reads, in one-letter code: Podocan-like protein 1 (512 aa).

The first 26 residues, 1–26, serve as a signal peptide directing secretion; sequence MAESGLAMWPSLLLLLLLPGPPPVAG. The LRRNT domain maps to 37 to 74; it reads ESLQPLPRACPLRCSCPRVDTVDCDGLDLRVFPDNITR. N71 is a glycosylation site (N-linked (GlcNAc...) asparagine). LRR repeat units lie at residues 75-96, 99-119, 125-146, 147-167, 170-193, 196-216, 217-238, 241-261, 267-288, 289-309, 312-332, 338-359, 360-380, 383-396, 409-430, 431-451, and 454-474; these read AAQHLSLQNNQLQELPYNELSR, GLRTLNLHNNLISSEGLPDEA, QLQHLCVAHNKLSVAPQFLPRS, LRVADLAANQVMEIFPLTFGE, ALRSVYLHNNQLSNAGLPPDAFRG, AIATLSLSNNQLSYLPPSLPP, SLERLHLQNNLISKVPRGALSR, QLRELYLQHNQLTDSGLDATT, SLEYLDLSHNQLTTVPAGLPRT, LAILHLGRNRIRQVEAARLHG, GLRYLLLQHNQLGSSGLPAGA, GLHTLHLYGNGLDRVPPALPRR, LRALVLPHNHVAALGARDLVA, GLTELNLAYNRLAS, ALRSLDLAGNQLTRLPMGLPTG, LRTLQLQRNQLRMLEPEPLAG, and QLRELSLAHNRLRVGDIGPGT.

The protein belongs to the small leucine-rich proteoglycan (SLRP) family. SLRP class V subfamily. In terms of processing, N-glycosylated.

The protein resides in the secreted. It is found in the extracellular space. Its subcellular location is the extracellular matrix. This is Podocan-like protein 1 (PODNL1) from Homo sapiens (Human).